Here is a 388-residue protein sequence, read N- to C-terminus: Succinate--CoA ligase [ADP-forming] subunit beta (388 aa).

In terms of domain architecture, ATP-grasp spans 9–244; that stretch reads KQLFARYGLP…QSQEDPREAQ (236 aa). Residues Lys46, 53–55, Glu99, Thr102, and Glu107 contribute to the ATP site; that span reads GRG. Positions 199 and 213 each coordinate Mg(2+). Substrate is bound by residues Asn264 and 321–323; that span reads GIV.

Belongs to the succinate/malate CoA ligase beta subunit family. Heterotetramer of two alpha and two beta subunits. Mg(2+) is required as a cofactor.

The catalysed reaction is succinate + ATP + CoA = succinyl-CoA + ADP + phosphate. It carries out the reaction GTP + succinate + CoA = succinyl-CoA + GDP + phosphate. Its pathway is carbohydrate metabolism; tricarboxylic acid cycle; succinate from succinyl-CoA (ligase route): step 1/1. In terms of biological role, succinyl-CoA synthetase functions in the citric acid cycle (TCA), coupling the hydrolysis of succinyl-CoA to the synthesis of either ATP or GTP and thus represents the only step of substrate-level phosphorylation in the TCA. The beta subunit provides nucleotide specificity of the enzyme and binds the substrate succinate, while the binding sites for coenzyme A and phosphate are found in the alpha subunit. In Salmonella arizonae (strain ATCC BAA-731 / CDC346-86 / RSK2980), this protein is Succinate--CoA ligase [ADP-forming] subunit beta.